The sequence spans 219 residues: Ras-like protein 1 (219 aa).

15 to 22 (GDGGVGKS) lines the GTP pocket. The Effector region signature appears at 37–45 (YDPTIEDSY). GTP contacts are provided by residues 62–66 (DTAGQ) and 121–124 (NKCD). The residue at position 216 (Cys216) is a Cysteine methyl ester. Cys216 is lipidated: S-farnesyl cysteine. Positions 217–219 (VIC) are cleaved as a propeptide — removed in mature form.

This sequence belongs to the small GTPase superfamily. Ras family. As to quaternary structure, scd1, scd2, cdc42, and ras1, in its GTP-bound state, act cooperatively to form a protein complex. Palmitoylated by the erf2-erf4 complex.

It is found in the cell membrane. It catalyses the reaction GTP + H2O = GDP + phosphate + H(+). With respect to regulation, alternates between an inactive form bound to GDP and an active form bound to GTP. Activated by a guanine nucleotide-exchange factor (GEF) and inactivated by a GTPase-activating protein (GAP). In terms of biological role, participates in the process of sexual differentiation and the determination of cell shape. Essential for mating and for recognition of the mating pheromone, but not for vegetative growth. Does not regulate the intracellular cAMP level. Regulates two downstream pathways, namely the byr2/byr1/spk1 mitogen-activated protein kinase cascade and the cdc42 small G protein pathway. The former is relevant to mating and sporulation, whereas the latter is relevant to mating, cell growth and cell morphology. The protein is Ras-like protein 1 (ras1) of Schizosaccharomyces pombe (strain 972 / ATCC 24843) (Fission yeast).